The primary structure comprises 391 residues: MQKLINSVQNYAWGSKTALTELYGMENPSSQPMAELWMGAHPKSSSRVQNAAGDIVSLRDVIESDKSTLLGEAVAKRFGELPFLFKVLCAAQPLSIQVHPNKHNSEIGFAKENAAGIPMDAAERNYKDPNHKPELVFALTPFLAMNAFREFSEIVSLLQPVAGAHPAIAHFLQQPHAERLSELFANLLNMQGEEKSRALAILKSALDSQQGEPWQTIRLISEFYPEDSGLFSPLLLNVVKLNPGEAMFLFAETPHAYLQGVALEVMANSDNVLRAGLTPKYIDIPELVANVKFEAKPANQLLTQPVKQGAELDFPIPVDDFAFSLHDLSDKETTISQQSAAILFCVEGDATLWKGSQQLQLKPGESAFIAANESPVTVKGHGRLARVYNKL.

The Zn(2+) site is built by Gln-97, His-99, Glu-134, and His-255. Arg-274 is a catalytic residue. Lys-280 carries the post-translational modification N6-acetyllysine.

This sequence belongs to the mannose-6-phosphate isomerase type 1 family. It depends on Zn(2+) as a cofactor.

It is found in the cytoplasm. The catalysed reaction is D-mannose 6-phosphate = D-fructose 6-phosphate. Its function is as follows. Involved in the conversion of glucose to GDP-L-fucose, which can be converted to L-fucose, a capsular polysaccharide. This Shigella flexneri protein is Mannose-6-phosphate isomerase (manA).